The sequence spans 517 residues: Putative alpha-L-fucosidase 1 (517 aa).

An N-terminal signal peptide occupies residues 1–20 (MATILLLLLGLLVGLPLLRA). Asn119, Asn249, Asn296, Asn321, Asn352, Asn496, and Asn511 each carry an N-linked (GlcNAc...) asparagine glycan.

The protein belongs to the glycosyl hydrolase 29 family.

The protein resides in the secreted. The protein localises to the extracellular space. It is found in the apoplast. It carries out the reaction an alpha-L-fucoside + H2O = L-fucose + an alcohol. Its function is as follows. Alpha-L-fucosidase is responsible for hydrolyzing the alpha-1,6-linked fucose joined to the reducing-end N-acetylglucosamine of the carbohydrate moieties of glycoproteins. Active only against 2'-fucosyl-lactitol when heterologously expressed. The sequence is that of Putative alpha-L-fucosidase 1 from Oryza sativa subsp. japonica (Rice).